The sequence spans 330 residues: Succinylglutamate desuccinylase (330 aa).

Histidine 53, glutamate 56, and histidine 147 together coordinate Zn(2+). The active site involves glutamate 210.

The protein belongs to the AspA/AstE family. Succinylglutamate desuccinylase subfamily. Requires Zn(2+) as cofactor.

The catalysed reaction is N-succinyl-L-glutamate + H2O = L-glutamate + succinate. It participates in amino-acid degradation; L-arginine degradation via AST pathway; L-glutamate and succinate from L-arginine: step 5/5. In terms of biological role, transforms N(2)-succinylglutamate into succinate and glutamate. This is Succinylglutamate desuccinylase from Yersinia enterocolitica serotype O:8 / biotype 1B (strain NCTC 13174 / 8081).